Here is a 153-residue protein sequence, read N- to C-terminus: Hydrogenase expression/formation protein HoxT (153 aa).

The protein belongs to the HupJ family.

This is Hydrogenase expression/formation protein HoxT (hoxT) from Azotobacter vinelandii.